A 498-amino-acid polypeptide reads, in one-letter code: Angiopoietin-1 (498 aa).

A signal peptide spans 1–15 (MTVFLSFAFLAAILT). Residues 81–119 (QKLQHLEHVMENYTQWLQKLENYIVENMKSEMAQIQQNA) are a coiled coil. N-linked (GlcNAc...) asparagine glycans are attached at residues N92, N122, N154, N243, and N295. Positions 153–261 (LNQTSRLEIQ…LELMDTVHNL (109 aa)) form a coiled coil. Residues 277-497 (REEEKPFRDC…STTMMIRPLD (221 aa)) form the Fibrinogen C-terminal domain. Intrachain disulfides connect C286-C315 and C439-C452.

In terms of assembly, homooligomer. Interacts with TEK/TIE2. Interacts with SVEP1/polydom. Interacts with THBD; this interaction significantly inhibits the generation of activated PC and TAFIa/CPB2 by the thrombin/thrombomodulin complex. Post-translationally, glycosylated.

It is found in the secreted. In terms of biological role, binds and activates TEK/TIE2 receptor by inducing its dimerization and tyrosine phosphorylation. Plays an important role in the regulation of angiogenesis, endothelial cell survival, proliferation, migration, adhesion and cell spreading, reorganization of the actin cytoskeleton, but also maintenance of vascular quiescence. Required for normal angiogenesis and heart development during embryogenesis. After birth, activates or inhibits angiogenesis, depending on the context. Inhibits angiogenesis and promotes vascular stability in quiescent vessels, where endothelial cells have tight contacts. In quiescent vessels, ANGPT1 oligomers recruit TEK to cell-cell contacts, forming complexes with TEK molecules from adjoining cells, and this leads to preferential activation of phosphatidylinositol 3-kinase and the AKT1 signaling cascades. In migrating endothelial cells that lack cell-cell adhesions, ANGT1 recruits TEK to contacts with the extracellular matrix, leading to the formation of focal adhesion complexes, activation of PTK2/FAK and of the downstream kinases MAPK1/ERK2 and MAPK3/ERK1, and ultimately to the stimulation of sprouting angiogenesis. Mediates blood vessel maturation/stability. Implicated in endothelial developmental processes later and distinct from that of VEGF. Appears to play a crucial role in mediating reciprocal interactions between the endothelium and surrounding matrix and mesenchyme. The sequence is that of Angiopoietin-1 (ANGPT1) from Homo sapiens (Human).